The following is a 493-amino-acid chain: Tripartite motif-containing protein 5 (493 aa).

A2 bears the N-acetylalanine mark. An RING-type zinc finger spans residues 15 to 59 (CPICLELLTQPLSLDCGHSFCQACLTANHEKSMLDKGESSCPVCR). S86 carries the post-translational modification Phosphoserine. Residues 90 to 132 (QKVDHCARHGEKLLLFCQEDGKVICWLCERSQEHRGHHTFLTE) form a B box-type zinc finger. The Zn(2+) site is built by C95, H98, C117, and H123. Residues 131 to 240 (TEEVAQECQV…LISDLEHRLQ (110 aa)) adopt a coiled-coil conformation. Positions 185–198 (FEQLRDILDWEESN) are required for interaction with GABARAP and for autophagy. Residues 281–493 (LKGMLEVFRE…VPMTLCSPSS (213 aa)) enclose the B30.2/SPRY domain.

The protein belongs to the TRIM/RBCC family. In terms of assembly, can form homodimers and homotrimers. In addition to lower-order dimerization, also exhibits a higher-order multimerization and both low- and high-order multimerizations are essential for its restriction activity. Interacts with BTBD1 and BTBD2. Interacts with PSMC4, PSMC5, PSMD7 and HSPA8/HSC70. Interacts (via B30.2/SPRY domain) with HSPA1A/B. Interacts with PSMC2, MAP3K7/TAK1, TAB2 and TAB3. Interacts with SQSTM1. Interacts with TRIM6 and TRIM34. Interacts with ULK1 (phosphorylated form), GABARAP, GABARAPL1, GABARAPL2, MAP1LC3A, MAP1LC3C and BECN1. In terms of processing, degraded in a proteasome-independent fashion in the absence of viral infection but in a proteasome-dependent fashion following exposure to restriction sensitive virus. Autoubiquitinated in a RING finger- and UBE2D2-dependent manner. Monoubiquitinated by TRIM21. Deubiquitinated by Yersinia YopJ. Ubiquitination may not lead to proteasomal degradation.

It localises to the cytoplasm. It is found in the nucleus. The catalysed reaction is S-ubiquitinyl-[E2 ubiquitin-conjugating enzyme]-L-cysteine + [acceptor protein]-L-lysine = [E2 ubiquitin-conjugating enzyme]-L-cysteine + N(6)-ubiquitinyl-[acceptor protein]-L-lysine.. It functions in the pathway protein modification; protein ubiquitination. Capsid-specific restriction factor that prevents infection from non-host-adapted retroviruses. Blocks viral replication early in the life cycle, after viral entry but before reverse transcription. In addition to acting as a capsid-specific restriction factor, also acts as a pattern recognition receptor that activates innate immune signaling in response to the retroviral capsid lattice. Binding to the viral capsid triggers its E3 ubiquitin ligase activity, and in concert with the heterodimeric ubiquitin conjugating enzyme complex UBE2V1-UBE2N (also known as UBC13-UEV1A complex) generates 'Lys-63'-linked polyubiquitin chains, which in turn are catalysts in the autophosphorylation of the MAP3K7/TAK1 complex (includes TAK1, TAB2, and TAB3). Activation of the MAP3K7/TAK1 complex by autophosphorylation results in the induction and expression of NF-kappa-B and MAPK-responsive inflammatory genes, thereby leading to an innate immune response in the infected cell. Plays a role in regulating autophagy through activation of autophagy regulator BECN1 by causing its dissociation from its inhibitors BCL2 and TAB2. In Gorilla gorilla gorilla (Western lowland gorilla), this protein is Tripartite motif-containing protein 5 (TRIM5).